The sequence spans 390 residues: Chorismate synthase (390 aa).

NADP(+) contacts are provided by R40 and R46. FMN contacts are provided by residues 128–130 (RAS), 251–252 (QA), G296, 311–315 (KPIPT), and R339.

Belongs to the chorismate synthase family. In terms of assembly, homotetramer. The cofactor is FMNH2.

The catalysed reaction is 5-O-(1-carboxyvinyl)-3-phosphoshikimate = chorismate + phosphate. The protein operates within metabolic intermediate biosynthesis; chorismate biosynthesis; chorismate from D-erythrose 4-phosphate and phosphoenolpyruvate: step 7/7. Functionally, catalyzes the anti-1,4-elimination of the C-3 phosphate and the C-6 proR hydrogen from 5-enolpyruvylshikimate-3-phosphate (EPSP) to yield chorismate, which is the branch point compound that serves as the starting substrate for the three terminal pathways of aromatic amino acid biosynthesis. This reaction introduces a second double bond into the aromatic ring system. The protein is Chorismate synthase of Sulfurihydrogenibium sp. (strain YO3AOP1).